We begin with the raw amino-acid sequence, 529 residues long: Bifunctional purine biosynthesis protein PurH (529 aa).

An MGS-like domain is found at 1-148 (MQQRRPVRRA…KNHKDVAIVV (148 aa)). N6-acetyllysine is present on K287.

It belongs to the PurH family.

The catalysed reaction is (6R)-10-formyltetrahydrofolate + 5-amino-1-(5-phospho-beta-D-ribosyl)imidazole-4-carboxamide = 5-formamido-1-(5-phospho-D-ribosyl)imidazole-4-carboxamide + (6S)-5,6,7,8-tetrahydrofolate. It catalyses the reaction IMP + H2O = 5-formamido-1-(5-phospho-D-ribosyl)imidazole-4-carboxamide. The protein operates within purine metabolism; IMP biosynthesis via de novo pathway; 5-formamido-1-(5-phospho-D-ribosyl)imidazole-4-carboxamide from 5-amino-1-(5-phospho-D-ribosyl)imidazole-4-carboxamide (10-formyl THF route): step 1/1. It functions in the pathway purine metabolism; IMP biosynthesis via de novo pathway; IMP from 5-formamido-1-(5-phospho-D-ribosyl)imidazole-4-carboxamide: step 1/1. This chain is Bifunctional purine biosynthesis protein PurH, found in Escherichia coli O7:K1 (strain IAI39 / ExPEC).